Consider the following 165-residue polypeptide: Putative ankyrin repeat domain-containing protein 20A5 (165 aa).

3 ANK repeats span residues 66 to 95 (QHRTALHLACASGHVKVVTLLVNRKCQIDI), 99 to 128 (ENRTPLIQAVHCQEEACAVILLEHGANPNL), and 132 to 161 (YGNTALHYAVYSESTSLAEKLLFHGENIEA).

This Homo sapiens (Human) protein is Putative ankyrin repeat domain-containing protein 20A5 (ANKRD20A5P).